Consider the following 312-residue polypeptide: UDP-N-acetylenolpyruvoylglucosamine reductase (312 aa).

In terms of domain architecture, FAD-binding PCMH-type spans 33 to 199 (RVGGKAEWYC…TGATLQLLPG (167 aa)). The active site involves Arg-178. The active-site Proton donor is Ser-229. Glu-299 is an active-site residue.

This sequence belongs to the MurB family. It depends on FAD as a cofactor.

It is found in the cytoplasm. The catalysed reaction is UDP-N-acetyl-alpha-D-muramate + NADP(+) = UDP-N-acetyl-3-O-(1-carboxyvinyl)-alpha-D-glucosamine + NADPH + H(+). It participates in cell wall biogenesis; peptidoglycan biosynthesis. Its function is as follows. Cell wall formation. This chain is UDP-N-acetylenolpyruvoylglucosamine reductase, found in Synechococcus sp. (strain JA-3-3Ab) (Cyanobacteria bacterium Yellowstone A-Prime).